The chain runs to 92 residues: UPF0728 protein C10orf53 homolog (92 aa).

The protein belongs to the UPF0728 family.

This is UPF0728 protein C10orf53 homolog from Danio rerio (Zebrafish).